The primary structure comprises 588 residues: Endogenous retrovirus group K member 7 Env polyprotein (588 aa).

A fusion peptide region spans residues 355 to 375 (FIFTLIAVIMGLIAVTATAAV). A helical transmembrane segment spans residues 522–542 (IGSTTIINLILILVCLFCLLL).

This sequence belongs to the beta type-B retroviral envelope protein family. HERV class-II K(HML-2) env subfamily. As to quaternary structure, the surface (SU) and transmembrane (TM) proteins form a heterodimer. SU and TM are attached by noncovalent interactions or by a labile interchain disulfide bond. Post-translationally, specific enzymatic cleavages in vivo yield the mature SU and TM proteins. In terms of tissue distribution, expressed in lung, placenta, testis and peripheral blood lymphocytes.

Its subcellular location is the virion. It is found in the cell membrane. Functionally, retroviral envelope proteins mediate receptor recognition and membrane fusion during early infection. Endogenous envelope proteins may have kept, lost or modified their original function during evolution. In terms of biological role, SU mediates receptor recognition. TM anchors the envelope heterodimer to the viral membrane through one transmembrane domain. The other hydrophobic domain, called fusion peptide, mediates fusion of the viral membrane with the target cell membrane. The chain is Endogenous retrovirus group K member 7 Env polyprotein (ERVK-7) from Homo sapiens (Human).